Here is a 345-residue protein sequence, read N- to C-terminus: Isocitrate lyase (345 aa).

Residue 58–60 (SGY) coordinates substrate. Asp-98 lines the Mg(2+) pocket. The active-site Proton acceptor is the Cys-135. Substrate-binding positions include 136–137 (GH), Arg-170, 230–234 (NYSSS), and Thr-260. Residues 318-345 (DPEARRRIEESEGFSEEQADPITSNDDD) are disordered. Residues 328–345 (SEGFSEEQADPITSNDDD) show a composition bias toward acidic residues.

In terms of assembly, homotetramer or homotrimer. The cofactor is Mg(2+).

It catalyses the reaction D-threo-isocitrate = glyoxylate + succinate. Its pathway is carbohydrate metabolism; glyoxylate cycle; (S)-malate from isocitrate: step 1/2. Its function is as follows. Involved in the metabolic adaptation in response to environmental changes. Catalyzes the reversible formation of succinate and glyoxylate from isocitrate, a key step of the glyoxylate cycle, which operates as an anaplerotic route for replenishing the tricarboxylic acid cycle during growth on fatty acid substrates. This Haloferax volcanii (strain ATCC 29605 / DSM 3757 / JCM 8879 / NBRC 14742 / NCIMB 2012 / VKM B-1768 / DS2) (Halobacterium volcanii) protein is Isocitrate lyase (aceA).